The chain runs to 418 residues: Phosphatidylcholine:ceramide cholinephosphotransferase 1 (418 aa).

An SAM domain is found at 12–75 (WSPKKVADWL…LDMIETLKME (64 aa)). Phosphoserine is present on serine 13. 5 consecutive transmembrane segments (helical) span residues 141–161 (FLAF…ISVV), 189–209 (FSIC…QWLL), 220–240 (FFCI…VTTL), 281–301 (MCGD…YLFI), and 309–329 (LWWY…CILL). Residue histidine 290 is part of the active site. Catalysis depends on residues histidine 333 and aspartate 337. Residues 335–352 (TVDVVVAYYITTRLFWWY) traverse the membrane as a helical segment.

Belongs to the sphingomyelin synthase family. Widely expressed. Highest expression in the cardiovascular system.

It localises to the golgi apparatus membrane. It catalyses the reaction an N-acylsphing-4-enine + a 1,2-diacyl-sn-glycero-3-phosphocholine = a sphingomyelin + a 1,2-diacyl-sn-glycerol. It carries out the reaction 1-(9Z-octadecenoyl)-2-acyl-sn-3-glycerol + a sphingomyelin = a 1-(9Z-octadecenoyl)-2-acyl-sn-glycero-3-phosphocholine + an N-acylsphing-4-enine. The catalysed reaction is N-hexadecanoylsphinganine + a 1,2-diacyl-sn-glycero-3-phosphocholine = N-hexadecanoyl-sphinganine-1-phosphocholine + a 1,2-diacyl-sn-glycerol. The enzyme catalyses N-hexadecanoyl-(4R)-hydroxysphinganine + a 1,2-diacyl-sn-glycero-3-phosphocholine = N-hexadecanoyl-(4R)-hydroxysphinganine-phosphocholine + a 1,2-diacyl-sn-glycerol. It catalyses the reaction an N-acylsphing-4-enine + a 1,2-diacyl-sn-glycero-3-phosphoethanolamine = an N-acylsphing-4-enine 1-phosphoethanolamine + a 1,2-diacyl-sn-glycerol. It functions in the pathway sphingolipid metabolism. Major sphingomyelin synthase at the Golgi apparatus. Catalyzes the reversible transfer of phosphocholine moiety in sphingomyelin biosynthesis: in the forward reaction transfers phosphocholine head group of phosphatidylcholine (PC) on to ceramide (CER) to form ceramide phosphocholine (sphingomyelin, SM) and diacylglycerol (DAG) as by-product, and in the reverse reaction transfers phosphocholine from SM to DAG to form PC and CER. The direction of the reaction depends on the levels of CER and DAG in Golgi membranes. Converts the newly synthesized CER, that is transported from the endoplasmic reticulum to the trans-Golgi by the Cer transport protein (CERT), to SM. Can form a heteromeric complex with glucosylceramide synthase (GCS) increasing SMS activity and reducing glucosylceramide synthesis, a critical mechanism that controls the metabolic fate of CER in the Golgi. Does not use free phosphorylcholine or CDP-choline as donor. Can also transfer phosphoethanolamine head group of phosphatidylethanolamine (PE) on to CER to form ceramide phosphoethanolamine (CPE). Regulates receptor-mediated signal transduction via mitogenic DAG and proapoptotic CER, as well as via SM, a structural component of membrane rafts that serve as platforms for signal transduction and protein sorting. Plays a role in secretory transport via regulation of DAG pool at the Golgi apparatus and its downstream effects on PRKD1. This is Phosphatidylcholine:ceramide cholinephosphotransferase 1 (SGMS1) from Sus scrofa (Pig).